Reading from the N-terminus, the 290-residue chain is ATP synthase gamma chain (290 aa).

Belongs to the ATPase gamma chain family. F-type ATPases have 2 components, CF(1) - the catalytic core - and CF(0) - the membrane proton channel. CF(1) has five subunits: alpha(3), beta(3), gamma(1), delta(1), epsilon(1). CF(0) has three main subunits: a, b and c.

It is found in the cell inner membrane. Its function is as follows. Produces ATP from ADP in the presence of a proton gradient across the membrane. The gamma chain is believed to be important in regulating ATPase activity and the flow of protons through the CF(0) complex. The protein is ATP synthase gamma chain of Paracoccus denitrificans (strain Pd 1222).